Reading from the N-terminus, the 629-residue chain is D-proline reductase proprotein PrdA (629 aa).

The Covalent intermediate with substrate; via pyruvic acid role is filled by C425. Pyruvic acid (Cys) is present on C425.

In terms of assembly, consists of 3 subunits of 23, 26 and 45 kDa (alpha, gamma and beta respectively). The molecular weight of the complex is approximately 870 kDa, suggesting a decameric structure, if all 3 subunits are present in equal stoichiometry. Post-translationally, the peptide chain is cleaved into beta and alpha chains, and the alpha chain N-terminal cysteine is deaminated and oxidized to form a reactive pyruvoyl group.

Its subcellular location is the cytoplasm. It catalyses the reaction [PrdC protein]-Se-L-selenocysteinyl-S-L-cysteine + 5-aminopentanoate = [PrdC protein]-L-selenocysteine/L-cysteine + D-proline. Functionally, D-proline reductase catalyzes the reductive cleavage of a C-N bond in D-proline resulting in the formation of 5-aminovalerate. The alpha subunit has been shown to bind D-proline, presumably via the pyruvoyl group. The chain is D-proline reductase proprotein PrdA (prdA) from Acetoanaerobium sticklandii (strain ATCC 12662 / DSM 519 / JCM 1433 / CCUG 9281 / NCIMB 10654 / HF) (Clostridium sticklandii).